Reading from the N-terminus, the 273-residue chain is Protein BMH2 (273 aa).

Residue Ser-2 is modified to N-acetylserine. The disordered stretch occupies residues 236 to 273; sequence DISESGQEDQQQQQQQQQQQQQQQQQAPAEQTQGEPTK. A compositionally biased stretch (low complexity) spans 245-261; it reads QQQQQQQQQQQQQQQQQ. Polar residues predominate over residues 262–273; it reads APAEQTQGEPTK.

This sequence belongs to the 14-3-3 family. As to quaternary structure, interacts with NTH1 (via N-terminus when phosphorylated by PKA); the interaction is direct and activates NTH1. Interacts with FIN1.

The protein resides in the cytoplasm. Its subcellular location is the nucleus. In Saccharomyces cerevisiae (strain ATCC 204508 / S288c) (Baker's yeast), this protein is Protein BMH2 (BMH2).